The sequence spans 434 residues: Angio-associated migratory cell protein (434 aa).

The interval Met-1–Glu-63 is disordered. A Phosphoserine modification is found at Ser-20. Positions Asp-39 to Glu-62 are enriched in acidic residues. 8 WD repeats span residues Leu-89–Glu-129, Gly-132–Ser-171, Glu-173–Gln-212, Pro-214–Lys-254, Gly-258–Arg-299, Ser-315–Gln-354, Gln-356–Asp-395, and Gly-398–Asp-433.

Its subcellular location is the cell membrane. It is found in the cytoplasm. In terms of biological role, plays a role in angiogenesis and cell migration. In smooth muscle cell migration, may act through the RhoA pathway. The sequence is that of Angio-associated migratory cell protein (AAMP) from Pongo abelii (Sumatran orangutan).